The following is a 447-amino-acid chain: uncharacterized protein (447 aa).

It belongs to the class-II fumarase/aspartase family.

Its subcellular location is the cytoplasm. The protein resides in the nucleus. This is an uncharacterized protein from Schizosaccharomyces pombe (strain 972 / ATCC 24843) (Fission yeast).